The chain runs to 433 residues: Pyroglutamylated RF-amide peptide receptor (433 aa).

Residues 1-46 lie on the Extracellular side of the membrane; sequence MQALNITAEQFSRLLSAHNLTREQFIHRYGLRPLVYTPELPARAKV. 2 N-linked (GlcNAc...) asparagine glycosylation sites follow: N5 and N19. Residues 47 to 67 traverse the membrane as a helical segment; that stretch reads AFALAGALIFALALFGNSLVI. The Cytoplasmic portion of the chain corresponds to 68 to 81; that stretch reads YVVTRSKAMRTVTN. Residues 82–102 form a helical membrane-spanning segment; the sequence is IFICSLALSDLLIAFFCIPVT. The Extracellular segment spans residues 103 to 120; sequence MLQNISDKWLGGAFICKM. Residues 121–141 traverse the membrane as a helical segment; that stretch reads VPFVQSTAVVTEILTMTCIAV. The Cytoplasmic segment spans residues 142 to 162; sequence ERHQGLVHPFKMKWQYTTRRA. Residues 163-183 traverse the membrane as a helical segment; that stretch reads FTILGVVWLAAIIVGSPMWHV. The Extracellular segment spans residues 184–212; sequence QRLEIKYDFLYEKEHICCLEEWASPVHQR. A helical transmembrane segment spans residues 213–233; the sequence is IYSTFILVILFLLPLVVMLVL. Topologically, residues 234-271 are cytoplasmic; it reads YSKIGYELWIKKRVGDSSALQTIHGKEMSKIARKKKRA. Residues 272 to 292 traverse the membrane as a helical segment; that stretch reads VIMMVTVVALFAACWAPFHVV. The Extracellular segment spans residues 293-313; sequence HMMVEYSNFEKEYDDVTIKMV. A helical membrane pass occupies residues 314–334; it reads FAVAQTIGFFNSICNPFVYAF. Residues 335 to 433 are Cytoplasmic-facing; sequence MNENFKKNFL…NSTFGSGHEL (99 aa). Residues 356–389 form a disordered region; sequence SSPARKPGNSGISMMQKRAKLSRPQRPVEETKGD.

Belongs to the G-protein coupled receptor 1 family. Highly expressed in the adrenal gland and at moderate levels in the eye and testis. Expressed widely in the brain with high levels in the hypothalamus and moderate levels in the amygdala, basal forebrain, cortex, medulla oblongata, midbrain and thalamus.

Its subcellular location is the cell membrane. Its function is as follows. Receptor for the orexigenic neuropeptide QRFP. The activity of this receptor is mediated by G proteins that modulate adenylate cyclase activity and intracellular calcium levels. This Rattus norvegicus (Rat) protein is Pyroglutamylated RF-amide peptide receptor (Qrfpr).